The sequence spans 204 residues: Cytochrome P450 monooxygenase PC-23 (204 aa).

Cys138 is a binding site for heme.

The protein belongs to the cytochrome P450 family. Requires heme as cofactor.

Its pathway is secondary metabolite biosynthesis. Its function is as follows. Cytochrome P450 monooxygenase; part of the gene cluster that mediates the biosynthesis of the indole diterpenes penitrems. The geranylgeranyl diphosphate (GGPP) synthase penG catalyzes the first step in penitrem biosynthesis via conversion of farnesyl pyrophosphate and isopentyl pyrophosphate into geranylgeranyl pyrophosphate (GGPP). Condensation of indole-3-glycerol phosphate with GGPP by the prenyl transferase penC then forms 3-geranylgeranylindole (3-GGI). Epoxidation by the FAD-dependent monooxygenase penM leads to a epoxidized-GGI that is substrate of the terpene cyclase penB for cyclization to yield paspaline. Paspaline is subsequently converted to 13-desoxypaxilline by the cytochrome P450 monooxygenase penP, the latter being then converted to paxilline by the cytochrome P450 monooxygenase penQ. Paxilline is converted to beta-paxitriol via C-10 ketoreduction by the short-chain dehydrogenase PC-15 which can be monoprenylated at the C-20 by the indole diterpene prenyltransferase penD. A two-step elimination (acetylation and elimination) process performed by the O-acetyltransferase PC-16 and the P.simplicissimum ptmI-ortholog not yet identified in P.crustosum, leads to the production of the prenylated form of penijanthine. The FAD-linked oxidoreductase ptmO then converts the prenylated form of penijanthine into PC-M5 which is in turn transformed into PC-M4 by the aromatic dimethylallyltransferase PC-22. A series of oxidation steps involving 4 cytochrome P450 monooxygenases (PC-21, PC-05, PC-23, PC-20) and a FAD-dependent monooxygenase (PC-14) are required for the transformation of PC-M4 to penitrems A and E. Synthesis of these final products is proposed to proceed via penitrems D and C (PC-21, PC-05, PC-14) and penitrems B and F (PC-21, PC-05, PC-14, PC-23). In Penicillium crustosum (Blue mold fungus), this protein is Cytochrome P450 monooxygenase PC-23.